The following is a 355-amino-acid chain: Methyltransferase FUS9 (355 aa).

Residues Y18, N63, D86, S123, and F124 each coordinate S-adenosyl-L-homocysteine. Residue F231 coordinates Mg(2+).

Belongs to the methyltransferase superfamily. Type-7 methyltransferase family. Requires Mg(2+) as cofactor.

It participates in mycotoxin biosynthesis. Its function is as follows. Methyltransferase; part of the gene cluster that mediates the biosynthesis of the mycotoxin fusarin C. Within the cluster, FUS1, FUS2, FUS8 and FUS9 are sufficient for fusarin production. The roles of the other FUS members are yet undetermined. The fusarin C synthetase FUS1 is responsible for the condensation of one acetyl-coenzyme A (CoA) unit with six malonyl-CoA units and the amide linkage of the arising heptaketide and homoserine, subsequently releasing the first intermediate, prefusarin, as an alcohol with an open ring structure. The cytochrome P450 monooxygenase FUS8 participates in multiple oxidation processes at carbon C-20 and is able to use the FUS1 product as substrate, resulting in formation of 20-hydroxy-prefusarin. This reaction seems to be essential before the 2-pyrrolidone ring closure can be catalyzed by FUS2, generating 20-hydroxy-fusarin. FUS8 is able to further oxidizes carbon C-20 after ring closure, resulting in the formation of carboxy-fusarin C. As the last step, FUS9 methylates the hydroxyl group at C-21 to generate fusarin C. Fusarin C can then rearrange to epi-fusarin C, the (z)-isomers, and fusarin A and fusarin D. The polypeptide is Methyltransferase FUS9 (Gibberella moniliformis (strain M3125 / FGSC 7600) (Maize ear and stalk rot fungus)).